The chain runs to 434 residues: Methylenetetrahydrofolate--tRNA-(uracil-5-)-methyltransferase TrmFO (434 aa).

Position 10-15 (10-15) interacts with FAD; it reads GAGLAG.

It belongs to the MnmG family. TrmFO subfamily. The cofactor is FAD.

The protein resides in the cytoplasm. The enzyme catalyses uridine(54) in tRNA + (6R)-5,10-methylene-5,6,7,8-tetrahydrofolate + NADH + H(+) = 5-methyluridine(54) in tRNA + (6S)-5,6,7,8-tetrahydrofolate + NAD(+). It carries out the reaction uridine(54) in tRNA + (6R)-5,10-methylene-5,6,7,8-tetrahydrofolate + NADPH + H(+) = 5-methyluridine(54) in tRNA + (6S)-5,6,7,8-tetrahydrofolate + NADP(+). Functionally, catalyzes the folate-dependent formation of 5-methyl-uridine at position 54 (M-5-U54) in all tRNAs. The polypeptide is Methylenetetrahydrofolate--tRNA-(uracil-5-)-methyltransferase TrmFO (Bacillus cereus (strain ATCC 14579 / DSM 31 / CCUG 7414 / JCM 2152 / NBRC 15305 / NCIMB 9373 / NCTC 2599 / NRRL B-3711)).